A 297-amino-acid chain; its full sequence is HTH-type transcriptional regulator ArgP (297 aa).

Residues 4-60 (PDYRTLQALDAVIRERGFERAAQKLCITQSAVSQRIKQLENMFGQPLLVRTVPPRPT) form the HTH lysR-type domain. A DNA-binding region (H-T-H motif) is located at residues 21-40 (FERAAQKLCITQSAVSQRIK).

Belongs to the LysR transcriptional regulatory family. As to quaternary structure, homodimer.

Functionally, controls the transcription of genes involved in arginine and lysine metabolism. The chain is HTH-type transcriptional regulator ArgP from Citrobacter koseri (strain ATCC BAA-895 / CDC 4225-83 / SGSC4696).